The following is a 645-amino-acid chain: Threonine--tRNA ligase (645 aa).

The TGS domain maps to M1 to T63. Residues D242–P540 are catalytic. Positions 336, 387, and 517 each coordinate Zn(2+).

Belongs to the class-II aminoacyl-tRNA synthetase family. Homodimer. The cofactor is Zn(2+).

Its subcellular location is the cytoplasm. It carries out the reaction tRNA(Thr) + L-threonine + ATP = L-threonyl-tRNA(Thr) + AMP + diphosphate + H(+). Functionally, catalyzes the attachment of threonine to tRNA(Thr) in a two-step reaction: L-threonine is first activated by ATP to form Thr-AMP and then transferred to the acceptor end of tRNA(Thr). Also edits incorrectly charged L-seryl-tRNA(Thr). The protein is Threonine--tRNA ligase of Staphylococcus saprophyticus subsp. saprophyticus (strain ATCC 15305 / DSM 20229 / NCIMB 8711 / NCTC 7292 / S-41).